The primary structure comprises 704 residues: ATP-dependent zinc metalloprotease FtsH (704 aa).

The Cytoplasmic segment spans residues 1–17 (MADSAKTPRGKKRRPFT). The helical transmembrane segment at 18 to 38 (GLALWIIVALLLGMAMFSLFG) threads the bilayer. Over 39-127 (RDGYQQIDTQ…DEIASSSWWS (89 aa)) the chain is Extracellular. A helical transmembrane segment spans residues 128–148 (TLLLSFLPLLIFIGLFWFLIM). Over 149–704 (NAQGGGKAMQ…GSAGTDGTGR (556 aa)) the chain is Cytoplasmic. 217 to 224 (GPPGTGKT) is a binding site for ATP. His439 lines the Zn(2+) pocket. Glu440 is a catalytic residue. Residues His443 and Asp515 each contribute to the Zn(2+) site. The tract at residues 624–704 (PREVWISSTE…GSAGTDGTGR (81 aa)) is disordered. Residues 681-704 (PHGGEPGGGGYGYDGSAGTDGTGR) show a composition bias toward gly residues.

The protein in the central section; belongs to the AAA ATPase family. This sequence in the C-terminal section; belongs to the peptidase M41 family. In terms of assembly, homohexamer. The cofactor is Zn(2+).

It localises to the cell membrane. Acts as a processive, ATP-dependent zinc metallopeptidase for both cytoplasmic and membrane proteins. Plays a role in the quality control of integral membrane proteins. This chain is ATP-dependent zinc metalloprotease FtsH, found in Brachybacterium faecium (strain ATCC 43885 / DSM 4810 / JCM 11609 / LMG 19847 / NBRC 14762 / NCIMB 9860 / 6-10).